The following is a 97-amino-acid chain: Acylphosphatase (97 aa).

The 87-residue stretch at 9–95 (TRHLRIHGLV…CDAQGFEQRE (87 aa)) folds into the Acylphosphatase-like domain. Residues arginine 24 and asparagine 42 contribute to the active site.

Belongs to the acylphosphatase family.

It carries out the reaction an acyl phosphate + H2O = a carboxylate + phosphate + H(+). The chain is Acylphosphatase (acyP) from Acidovorax sp. (strain JS42).